The sequence spans 122 residues: MIQPQTLLKVADNSGAKEIMCIRVLGGSKRKFGNISDVIVASVKSATPGGVVKKGEVVKAVIVRSAKGLRRADGSYIKFDENAAVIIKDDKQPRGTRIFGPVARELRDKEFNKILSLAPEVL.

The protein belongs to the universal ribosomal protein uL14 family. Part of the 50S ribosomal subunit. Forms a cluster with proteins L3 and L19. In the 70S ribosome, L14 and L19 interact and together make contacts with the 16S rRNA in bridges B5 and B8.

Binds to 23S rRNA. Forms part of two intersubunit bridges in the 70S ribosome. The sequence is that of Large ribosomal subunit protein uL14 from Clostridium botulinum (strain Alaska E43 / Type E3).